The primary structure comprises 114 residues: Ferredoxin (114 aa).

[3Fe-4S] cluster is bound by residues C9 and C17. C21, C40, C43, and C46 together coordinate [4Fe-4S] cluster. The 4Fe-4S ferredoxin-type domain maps to 31–60 (RMLYINPDECVDCGACKPACRVEAIYWEGD). C50 serves as a coordination point for [3Fe-4S] cluster.

Requires [4Fe-4S] cluster as cofactor. It depends on [3Fe-4S] cluster as a cofactor.

Its function is as follows. Ferredoxins are iron-sulfur proteins that transfer electrons in a wide variety of metabolic reactions. The sequence is that of Ferredoxin (fdxA) from Mycobacterium tuberculosis (strain ATCC 25618 / H37Rv).